Reading from the N-terminus, the 272-residue chain is 2-C-methyl-D-erythritol 4-phosphate cytidylyltransferase (272 aa).

Belongs to the IspD/TarI cytidylyltransferase family. IspD subfamily.

The enzyme catalyses 2-C-methyl-D-erythritol 4-phosphate + CTP + H(+) = 4-CDP-2-C-methyl-D-erythritol + diphosphate. The protein operates within isoprenoid biosynthesis; isopentenyl diphosphate biosynthesis via DXP pathway; isopentenyl diphosphate from 1-deoxy-D-xylulose 5-phosphate: step 2/6. Catalyzes the formation of 4-diphosphocytidyl-2-C-methyl-D-erythritol from CTP and 2-C-methyl-D-erythritol 4-phosphate (MEP). The chain is 2-C-methyl-D-erythritol 4-phosphate cytidylyltransferase from Xanthomonas oryzae pv. oryzae (strain PXO99A).